The primary structure comprises 167 residues: Protein-export protein SecB (167 aa).

The tract at residues 1–20 (MASNDDAPVGAANGNGNTGA) is disordered.

This sequence belongs to the SecB family. As to quaternary structure, homotetramer, a dimer of dimers. One homotetramer interacts with 1 SecA dimer.

It localises to the cytoplasm. Its function is as follows. One of the proteins required for the normal export of preproteins out of the cell cytoplasm. It is a molecular chaperone that binds to a subset of precursor proteins, maintaining them in a translocation-competent state. It also specifically binds to its receptor SecA. This chain is Protein-export protein SecB, found in Mesorhizobium japonicum (strain LMG 29417 / CECT 9101 / MAFF 303099) (Mesorhizobium loti (strain MAFF 303099)).